The chain runs to 399 residues: Carbamoyl phosphate synthase small chain (399 aa).

Positions 1 to 209 (MEKFKLLKLG…SAINKKLHTS (209 aa)) are CPSase. L-glutamine is bound by residues Ser-55, Gly-261, and Gly-263. Positions 213–399 (RIIVLDLGVK…VYIIYKSKSS (187 aa)) constitute a Glutamine amidotransferase type-1 domain. Residue Cys-289 is the Nucleophile of the active site. L-glutamine-binding residues include Leu-290, Gln-293, Asn-329, Gly-331, and Phe-332. Active-site residues include His-372 and Glu-374.

This sequence belongs to the CarA family. Composed of two chains; the small (or glutamine) chain promotes the hydrolysis of glutamine to ammonia, which is used by the large (or ammonia) chain to synthesize carbamoyl phosphate. Tetramer of heterodimers (alpha,beta)4.

Its subcellular location is the plastid. The protein resides in the chloroplast. The enzyme catalyses hydrogencarbonate + L-glutamine + 2 ATP + H2O = carbamoyl phosphate + L-glutamate + 2 ADP + phosphate + 2 H(+). It carries out the reaction L-glutamine + H2O = L-glutamate + NH4(+). The protein operates within amino-acid biosynthesis; L-arginine biosynthesis; carbamoyl phosphate from bicarbonate: step 1/1. It functions in the pathway pyrimidine metabolism; UMP biosynthesis via de novo pathway; (S)-dihydroorotate from bicarbonate: step 1/3. Functionally, small subunit of the glutamine-dependent carbamoyl phosphate synthetase (CPSase). CPSase catalyzes the formation of carbamoyl phosphate from the ammonia moiety of glutamine, carbonate, and phosphate donated by ATP, constituting the first step of 2 biosynthetic pathways, one leading to arginine and/or urea and the other to pyrimidine nucleotides. The small subunit (glutamine amidotransferase) binds and cleaves glutamine to supply the large subunit with the substrate ammonia. The chain is Carbamoyl phosphate synthase small chain from Cyanidium caldarium (Red alga).